A 121-amino-acid chain; its full sequence is Small ribosomal subunit protein uS13 (121 aa).

A disordered region spans residues 97 to 121; the sequence is PVRGQKTHSNARTRKGPRASRIKKK. Residues 101–121 are compositionally biased toward basic residues; sequence QKTHSNARTRKGPRASRIKKK.

This sequence belongs to the universal ribosomal protein uS13 family. In terms of assembly, part of the 30S ribosomal subunit. Forms a loose heterodimer with protein S19. Forms two bridges to the 50S subunit in the 70S ribosome.

Located at the top of the head of the 30S subunit, it contacts several helices of the 16S rRNA. In the 70S ribosome it contacts the 23S rRNA (bridge B1a) and protein L5 of the 50S subunit (bridge B1b), connecting the 2 subunits; these bridges are implicated in subunit movement. Contacts the tRNAs in the A and P-sites. This Kosmotoga olearia (strain ATCC BAA-1733 / DSM 21960 / TBF 19.5.1) protein is Small ribosomal subunit protein uS13.